The sequence spans 200 residues: Troponin I-like protein (200 aa).

2 disordered regions span residues 1 to 20 (MGDEEKRKMEEKERKKAEVR) and 181 to 200 (ENKADKKPEWALGSKKENEE). Residues 2 to 116 (GDEEKRKMEE…EDAKYDLEYE (115 aa)) are a coiled coil.

This sequence belongs to the troponin I family. As to expression, expressed in salivary gland, gut, muscle and cuticle (at protein level).

Functionally, inhibits endothelial cell proliferation and angiogenesis in a vertebrate host. Probably required for efficient blood feeding on vertebrate hosts. This chain is Troponin I-like protein, found in Haemaphysalis longicornis (Bush tick).